We begin with the raw amino-acid sequence, 387 residues long: 3-ketoacyl-CoA thiolase (387 aa).

Residue C91 is the Acyl-thioester intermediate of the active site. Active-site proton acceptor residues include H343 and C373.

It belongs to the thiolase-like superfamily. Thiolase family. Heterotetramer of two alpha chains (FadB) and two beta chains (FadA).

Its subcellular location is the cytoplasm. The enzyme catalyses an acyl-CoA + acetyl-CoA = a 3-oxoacyl-CoA + CoA. It participates in lipid metabolism; fatty acid beta-oxidation. Functionally, catalyzes the final step of fatty acid oxidation in which acetyl-CoA is released and the CoA ester of a fatty acid two carbons shorter is formed. This Vibrio cholerae serotype O1 (strain ATCC 39315 / El Tor Inaba N16961) protein is 3-ketoacyl-CoA thiolase.